The sequence spans 205 residues: GTP cyclohydrolase 1 (205 aa).

The Zn(2+) site is built by C94, H97, and C165.

This sequence belongs to the GTP cyclohydrolase I family. As to quaternary structure, homomer.

The catalysed reaction is GTP + H2O = 7,8-dihydroneopterin 3'-triphosphate + formate + H(+). Its pathway is cofactor biosynthesis; 7,8-dihydroneopterin triphosphate biosynthesis; 7,8-dihydroneopterin triphosphate from GTP: step 1/1. In Sinorhizobium fredii (strain NBRC 101917 / NGR234), this protein is GTP cyclohydrolase 1.